The sequence spans 315 residues: Olfactory receptor 3A3 (315 aa).

Topologically, residues 1–28 are extracellular; it reads MESEAGTNRTAVAEFMLLGLVQTEEMQS. Asparagine 8 carries an N-linked (GlcNAc...) asparagine glycan. Residues 29–52 traverse the membrane as a helical segment; it reads VIFVLLLFAYLVTTGGNLSILAAI. Over 53-60 the chain is Cytoplasmic; it reads LVEPKLHT. The helical transmembrane segment at 61–82 threads the bilayer; sequence PMYFFLGNLSVLDVGCITVTVP. Residues 83–103 are Extracellular-facing; that stretch reads AMLGRLLSHKSTISYDACLSQ. Cysteine 100 and cysteine 192 are oxidised to a cystine. Residues 104 to 123 traverse the membrane as a helical segment; the sequence is LFFFHLLAGMDCFLLTAMAY. Residues 124–143 are Cytoplasmic-facing; the sequence is DRFLAICRPLTYSTHMNQRV. Residues 144–161 form a helical membrane-spanning segment; that stretch reads QRMLVAVSWTCAFTNALT. Residues 162 to 199 lie on the Extracellular side of the membrane; that stretch reads HTIALTTLNFCGPSVINHFYCDLPQLFQLSCSSTQLNE. A helical transmembrane segment spans residues 200–222; that stretch reads LLLFVAAAVMAVAPLVFISVSYA. The Cytoplasmic segment spans residues 223–239; it reads HVVAAVLQIHSAEGRKK. A helical transmembrane segment spans residues 240–262; the sequence is AFSTCGSHLTVVGIFYGTGVFSY. Topologically, residues 263–275 are extracellular; sequence MRLGSVESSDKDK. Residues 276 to 295 form a helical membrane-spanning segment; it reads GVGVFMTVINPMLNPLIYSL. Over 296–315 the chain is Cytoplasmic; it reads RNTDVQGALCQLLVVKRSLT.

This sequence belongs to the G-protein coupled receptor 1 family.

The protein localises to the cell membrane. In terms of biological role, odorant receptor. In Pan troglodytes (Chimpanzee), this protein is Olfactory receptor 3A3 (OR3A3).